The following is a 244-amino-acid chain: Isoprenyl transferase (244 aa).

Residue Asp20 is part of the active site. Asp20 serves as a coordination point for Mg(2+). Substrate is bound by residues 21–24 (GNGR), Trp25, Arg33, His37, and 65–67 (SSE). Catalysis depends on Asn68, which acts as the Proton acceptor. Substrate-binding positions include Trp69, Arg71, Arg188, and 194–196 (RIS). Glu207 contributes to the Mg(2+) binding site.

The protein belongs to the UPP synthase family. In terms of assembly, homodimer. Mg(2+) is required as a cofactor.

In terms of biological role, catalyzes the condensation of isopentenyl diphosphate (IPP) with allylic pyrophosphates generating different type of terpenoids. This Rhodopirellula baltica (strain DSM 10527 / NCIMB 13988 / SH1) protein is Isoprenyl transferase.